Consider the following 453-residue polypeptide: MSEHTRKSFSDLGISPWLIDTLKALAIYEPTDIQEGVIAQILEGRNCIGGAKTGSGKTAAFALPIIEKWSKDPSGIFALILTPTRELAIQIDEQFAALGANLNLKHALIVGGMDMIRQSIDLSKRPHVVVATPGRLADLIRSNGEETIAGLRRIKFLVMDEADRLLSPTFADDLDDCFSVLPASEDRQTLLFTATVTDAIRQLKYQPQKNNKPPLWLYEVETDNISVPSTLQQSYIFVSSQVREAYLVHLLTIPENAKKSAIIFVNRTRTAELIYSILRLLELRVTELHSEMVQRERINSLGRFRAEAAKILVATDVASRGLDIPSVQLVINFDLPRDPDDYIHRVGRTARAGRSGESISIVTERDVDLVHAIEDRVGTKLSEYEHVSENKMLEYIKEVTDAKRQASLEMIDRGFGERRQKRNEKRLMANGISNKLKNSGRKKKAKNTLSTEK.

The short motif at 7 to 35 is the Q motif element; that stretch reads KSFSDLGISPWLIDTLKALAIYEPTDIQE. The region spanning 38 to 214 is the Helicase ATP-binding domain; that stretch reads IAQILEGRNC…YQPQKNNKPP (177 aa). Position 51 to 58 (51 to 58) interacts with ATP; that stretch reads AKTGSGKT. Positions 160 to 163 match the DEAD box motif; sequence DEAD. In terms of domain architecture, Helicase C-terminal spans 230–393; the sequence is TLQQSYIFVS…YEHVSENKML (164 aa). A disordered region spans residues 413-453; sequence RGFGERRQKRNEKRLMANGISNKLKNSGRKKKAKNTLSTEK.

This sequence belongs to the DEAD box helicase family. DDX49/DBP8 subfamily.

It is found in the nucleus. It localises to the nucleolus. It carries out the reaction ATP + H2O = ADP + phosphate + H(+). Its function is as follows. ATP-binding RNA helicase involved in 40S ribosomal subunit biogenesis and is required for the normal formation of 18S rRNAs through pre-rRNA processing at A0, A1 and A2 sites. Required for vegetative growth. The chain is ATP-dependent RNA helicase dbp8 (dbp8) from Schizosaccharomyces pombe (strain 972 / ATCC 24843) (Fission yeast).